Consider the following 548-residue polypeptide: Folylpolyglutamate synthase (548 aa).

Residue 130 to 133 (GKGS) coordinates ATP. Residues serine 157, glutamate 234, and histidine 262 each coordinate Mg(2+). Residues arginine 382 and aspartate 396 each coordinate ATP.

The protein belongs to the folylpolyglutamate synthase family. Requires a monovalent cation as cofactor.

Its subcellular location is the mitochondrion inner membrane. The protein resides in the mitochondrion matrix. The protein localises to the cytoplasm. It catalyses the reaction (6S)-5,6,7,8-tetrahydrofolyl-(gamma-L-Glu)(n) + L-glutamate + ATP = (6S)-5,6,7,8-tetrahydrofolyl-(gamma-L-Glu)(n+1) + ADP + phosphate + H(+). It participates in cofactor biosynthesis; tetrahydrofolylpolyglutamate biosynthesis. Functionally, catalyzes conversion of folates to polyglutamate derivatives allowing concentration of folate compounds in the cell and the intracellular retention of these cofactors, which are important substrates for most of the folate-dependent enzymes that are involved in one-carbon transfer reactions involved in purine, pyrimidine and amino acid synthesis. Required for methionine synthesis and maintenance of intact mitochondrial DNA. Involved in telomere maintenance. The chain is Folylpolyglutamate synthase from Saccharomyces cerevisiae (strain FostersO) (Baker's yeast).